We begin with the raw amino-acid sequence, 110 residues long: MELTVESLDSPALTKAQLADLLFDEIGLNKRESKEMVDAFFELISQSLVTGEDVKLSGFGNFQIRTKAPRPGRNPRTGEAIPIEARRVVTFHASSKLKEQIQEGTTGSAS.

This sequence belongs to the bacterial histone-like protein family. As to quaternary structure, heterodimer of an alpha and a beta chain.

This protein is one of the two subunits of integration host factor, a specific DNA-binding protein that functions in genetic recombination as well as in transcriptional and translational control. The sequence is that of Integration host factor subunit alpha from Delftia acidovorans (strain DSM 14801 / SPH-1).